The chain runs to 155 residues: FHA domain-containing protein FhaB (155 aa).

The helical transmembrane segment at 6-28 threads the bilayer; that stretch reads LQLTRAGFLMLLWVFIWSVLRIL. T36 is subject to Phosphothreonine. Residues 83–132 enclose the FHA domain; that stretch reads VLIGRADDSTLVLTDDYASTRHARLSMRGSEWYVEDLGSTNGTYLDRAKV.

Post-translationally, phosphorylated by PknB. Dephosphorylated by PstP.

The protein localises to the cell membrane. The polypeptide is FHA domain-containing protein FhaB (fhaB) (Mycobacterium tuberculosis (strain CDC 1551 / Oshkosh)).